A 265-amino-acid chain; its full sequence is Mlc titration factor A (265 aa).

Positions 111, 148, 152, and 211 each coordinate Zn(2+).

Belongs to the MtfA family. Interacts with Mlc. Zn(2+) serves as cofactor.

The protein localises to the cytoplasm. Functionally, involved in the modulation of the activity of the glucose-phosphotransferase system (glucose-PTS). Interacts with the transcriptional repressor Mlc, preventing its interaction with DNA and leading to the modulation of expression of genes regulated by Mlc, including ptsG, which encodes the PTS system glucose-specific EIICB component. In terms of biological role, shows zinc-dependent metallopeptidase activity. The polypeptide is Mlc titration factor A (Salmonella choleraesuis (strain SC-B67)).